The following is a 145-amino-acid chain: Bacilliredoxin Acid345_1880 (145 aa).

Belongs to the bacilliredoxin family.

The polypeptide is Bacilliredoxin Acid345_1880 (Koribacter versatilis (strain Ellin345)).